The primary structure comprises 308 residues: UPF0282 protein YG5714_2245 (308 aa).

It belongs to the UPF0282 family.

The protein is UPF0282 protein YG5714_2245 of Saccharolobus islandicus (strain Y.G.57.14 / Yellowstone #1) (Sulfolobus islandicus).